The chain runs to 466 residues: SVGFKAGVKEYKLTYYTPTYETKDTDILAAFRVTPQPGVPPEEAGAAVAXESSTGTWTTVWTDGLTSLDRYKGRCYHIEPVAGEENQFIAYVAYPLDLFEEGSVTNMFTSIVGNVFGFKALRALRLEDLRIPVAYVKTFQGPPHXIQVERDKLNKYGRPLLXCTIKPKLGLSAKNYGRAVYECPRGXXDFTKDDENVNSQPFMRWRDRFLFCAEAXYEAQTETGEIKGHYLNATAGTNEEMMKRAVFARELGVPIVMHDYLTGGFTANTSLAHYCRDNGLLLHIHRAMHAVIDRQKNHGIHFRVLAKALRMSGGDHIHSGTVVGKLEGERDITLGFVDLLRDGFIEKDRSRGIYFTQDWVXLPGVLPVASGGIHVXHMPALTEIFGDDSVLQFGGGTLGHPWXXRPGAVANRVALEACVQARNEGRDLAXEGNEIIREASKWSPELAAACEVWKEIKFEFEAMDTL.

An N6,N6,N6-trimethyllysine modification is found at Lys5. Substrate contacts are provided by Asn114 and Thr164. Lys166 acts as the Proton acceptor in catalysis. Lys168 lines the substrate pocket. 3 residues coordinate Mg(2+): Lys192, Asp194, and Glu195. Lys192 bears the N6-carboxylysine mark. Residue His285 is the Proton acceptor of the active site. Substrate contacts are provided by Arg286, His318, and Ser370.

Belongs to the RuBisCO large chain family. Type I subfamily. As to quaternary structure, heterohexadecamer of 8 large chains and 8 small chains. Mg(2+) serves as cofactor.

Its subcellular location is the plastid. The protein localises to the chloroplast. The catalysed reaction is 2 (2R)-3-phosphoglycerate + 2 H(+) = D-ribulose 1,5-bisphosphate + CO2 + H2O. The enzyme catalyses D-ribulose 1,5-bisphosphate + O2 = 2-phosphoglycolate + (2R)-3-phosphoglycerate + 2 H(+). RuBisCO catalyzes two reactions: the carboxylation of D-ribulose 1,5-bisphosphate, the primary event in carbon dioxide fixation, as well as the oxidative fragmentation of the pentose substrate in the photorespiration process. Both reactions occur simultaneously and in competition at the same active site. In Cornus kousa (Kousa dogwood), this protein is Ribulose bisphosphate carboxylase large chain.